We begin with the raw amino-acid sequence, 428 residues long: Histidine--tRNA ligase (428 aa).

This sequence belongs to the class-II aminoacyl-tRNA synthetase family.

The protein resides in the cytoplasm. It catalyses the reaction tRNA(His) + L-histidine + ATP = L-histidyl-tRNA(His) + AMP + diphosphate + H(+). The polypeptide is Histidine--tRNA ligase (Sulfolobus acidocaldarius (strain ATCC 33909 / DSM 639 / JCM 8929 / NBRC 15157 / NCIMB 11770)).